The sequence spans 317 residues: Transcription factor EC (317 aa).

The interval 1–44 (MTLDHQILNQSFKRSHPPTPSSELLVQHGHPSPESDTGLTGNPL) is disordered. A necessary for transcriptional transactivation region spans residues 1–90 (MTLDHQILNQ…GLTSASCPSS (90 aa)). Positions 34–43 (ESDTGLTGNP) are enriched in polar residues. In terms of domain architecture, bHLH spans 110–163 (QKKDNHNLIERRRRYNINYRIKELGTLIPKSNDPDMRWNKGTILKASVEYIKWL). The tract at residues 241-317 (TSPELCDQAM…SFSSEDGDEL (77 aa)) is necessary for transcriptional transactivation. The tract at residues 297–317 (PAVSKESSRRSSFSSEDGDEL) is disordered.

This sequence belongs to the MiT/TFE family. In terms of assembly, homodimer. Forms heterodimers with MITF and TFE3. Interacts with MITF.

It localises to the nucleus. Functionally, transcriptional regulator that acts as a repressor or an activator. Acts as a transcriptional repressor on minimal promoter containing element F (that includes an E-box sequence). Binds to element F in an E-box sequence-specific manner. Acts as a transcriptional transactivator on the proximal promoter region of the tartrate-resistant acid phosphatase (TRAP) E-box containing promoter. Collaborates with MITF in target gene activation. Acts as a transcriptional repressor on minimal promoter containing mu E3 enhancer sequence. Binds to mu E3 DNA sequence of the immunoglobulin heavy-chain gene enhancer. Binds DNA in a homo- or heterodimeric form. The sequence is that of Transcription factor EC (TFEC) from Bos taurus (Bovine).